A 154-amino-acid polypeptide reads, in one-letter code: Putative pre-16S rRNA nuclease (154 aa).

Belongs to the YqgF nuclease family.

Its subcellular location is the cytoplasm. Its function is as follows. Could be a nuclease involved in processing of the 5'-end of pre-16S rRNA. The protein is Putative pre-16S rRNA nuclease of Rickettsia africae (strain ESF-5).